A 341-amino-acid polypeptide reads, in one-letter code: DNA-directed RNA polymerase subunit alpha (341 aa).

The alpha N-terminal domain (alpha-NTD) stretch occupies residues 1-226 (MLIAQRPTIT…ELFGLVRELN (226 aa)). Positions 241–341 (AALAADLALP…DQRYIETEQL (101 aa)) are alpha C-terminal domain (alpha-CTD).

This sequence belongs to the RNA polymerase alpha chain family. As to quaternary structure, homodimer. The RNAP catalytic core consists of 2 alpha, 1 beta, 1 beta' and 1 omega subunit. When a sigma factor is associated with the core the holoenzyme is formed, which can initiate transcription.

It catalyses the reaction RNA(n) + a ribonucleoside 5'-triphosphate = RNA(n+1) + diphosphate. Functionally, DNA-dependent RNA polymerase catalyzes the transcription of DNA into RNA using the four ribonucleoside triphosphates as substrates. The polypeptide is DNA-directed RNA polymerase subunit alpha (Acidothermus cellulolyticus (strain ATCC 43068 / DSM 8971 / 11B)).